A 131-amino-acid chain; its full sequence is MDKKTIYFICTGNSCRSQMAEGWGKKILGDEWQVYSGGIEAHGVNPKAIEAMKEVGIDISNHTSNLIDQNILHQSDLVVTLCSDADKNCPILPPSVKKEHWGFDDPAGKPWSEFQRVRDEIKTAIESFKTR.

Active-site nucleophile residues include C10, C82, and C89. 2 cysteine pairs are disulfide-bonded: C10-C82 and C82-C89.

Belongs to the low molecular weight phosphotyrosine protein phosphatase family. Thioredoxin-coupled ArsC subfamily.

It localises to the cytoplasm. The enzyme catalyses arsenate + [thioredoxin]-dithiol + H(+) = arsenite + [thioredoxin]-disulfide + H2O. Its function is as follows. Catalyzes the reduction of arsenate [As(V)] to arsenite [As(III)]. The chain is Arsenate reductase 2 from Staphylococcus epidermidis (strain ATCC 35984 / DSM 28319 / BCRC 17069 / CCUG 31568 / BM 3577 / RP62A).